The chain runs to 472 residues: Aspartyl/glutamyl-tRNA(Asn/Gln) amidotransferase subunit B (472 aa).

The protein belongs to the GatB/GatE family. GatB subfamily. As to quaternary structure, heterotrimer of A, B and C subunits.

The enzyme catalyses L-glutamyl-tRNA(Gln) + L-glutamine + ATP + H2O = L-glutaminyl-tRNA(Gln) + L-glutamate + ADP + phosphate + H(+). It catalyses the reaction L-aspartyl-tRNA(Asn) + L-glutamine + ATP + H2O = L-asparaginyl-tRNA(Asn) + L-glutamate + ADP + phosphate + 2 H(+). In terms of biological role, allows the formation of correctly charged Asn-tRNA(Asn) or Gln-tRNA(Gln) through the transamidation of misacylated Asp-tRNA(Asn) or Glu-tRNA(Gln) in organisms which lack either or both of asparaginyl-tRNA or glutaminyl-tRNA synthetases. The reaction takes place in the presence of glutamine and ATP through an activated phospho-Asp-tRNA(Asn) or phospho-Glu-tRNA(Gln). The chain is Aspartyl/glutamyl-tRNA(Asn/Gln) amidotransferase subunit B from Campylobacter jejuni (strain RM1221).